A 1286-amino-acid polypeptide reads, in one-letter code: ABC transporter B family member 4 (1286 aa).

Residues 1–39 (MASESGLNGDPNILEEVSETKRDKEEEEEVKKTEKKDEE) are disordered. Residues 18-39 (SETKRDKEEEEEVKKTEKKDEE) are compositionally biased toward basic and acidic residues. The helical transmembrane segment at 60–80 (FLLMILGTLGSIGNGLGFPLM) threads the bilayer. Positions 63-349 (MILGTLGSIG…TSPCLSAFAA (287 aa)) constitute an ABC transmembrane type-1 1 domain. Asparagine 94 and asparagine 97 each carry an N-linked (GlcNAc...) asparagine glycan. Transmembrane regions (helical) follow at residues 109-129 (FVWLGIGTFAAAFLQLSGWMI), 186-206 (IQLLATFVGGFVIAFVRGWLL), 208-228 (LVMLSSIPLLVMAGALLAIVI), 288-308 (GLGLGTLFLVVFCSYALAVWY), and 317-337 (GYTGGQVLNIIIAVLTGSMSL). Residues 384-620 (IELKDVYFTY…PEGAYSQLIR (237 aa)) enclose the ABC transporter 1 domain. 419 to 426 (GQSGSGKS) contributes to the ATP binding site. N-linked (GlcNAc...) asparagine glycans are attached at residues asparagine 500 and asparagine 571. Over residues 625–636 (KKSDENAAEEQK) the composition is skewed to basic and acidic residues. Positions 625–669 (KKSDENAAEEQKMSSIESFKQSSLRKSSLGRSLSKGGSSRGNSSR) are disordered. Residues 646 to 669 (SSLRKSSLGRSLSKGGSSRGNSSR) show a composition bias toward low complexity. The N-linked (GlcNAc...) asparagine glycan is linked to asparagine 666. Serine 671 bears the Phosphoserine mark. In terms of domain architecture, ABC transmembrane type-1 2 spans 720–1007 (LILGSISAAA…SSSLSPDSSK (288 aa)). Transmembrane regions (helical) follow at residues 721-741 (ILGSISAAANGVILPIFGILI) and 764-784 (IIFMVLGFASIIAYPAQTFFF). N-linked (GlcNAc...) asparagine glycans are attached at residues asparagine 816 and asparagine 846. Transmembrane regions (helical) follow at residues 850–870 (ILAGLIIAFLACWQLAFVVLA), 871–891 (MLPLIALNGFLYMKFMKGFSA), 942–962 (GIVSGIGFGFSFFVLFSSYAA), and 976–996 (TTFDSVFRVFFALTMAAMAIS). The region spanning 1042 to 1279 (IELRHVSFKY…KDGVYASLVQ (238 aa)) is the ABC transporter 2 domain. ATP is bound at residue 1077–1084 (GESGSGKS). N-linked (GlcNAc...) asparagine glycosylation is found at asparagine 1131 and asparagine 1230.

It belongs to the ABC transporter superfamily. ABCB family. Multidrug resistance exporter (TC 3.A.1.201) subfamily. In terms of assembly, interacts with 1-naphthylphthalamic acid (NPA). In terms of processing, phosphorylation level varies significantly during early response to bacterial elicitor. Mostly expressed in roots, especially in the root elongation zone and lateral roots. In mature portion of the root, expressed in the epidermis and cortex. In the root elongation zone, confined to epidermis. In root tips, present in the root cap, S3 columella and epidermal cells.

The protein localises to the cell membrane. In terms of biological role, auxin influx transporter that mediates the transport of auxin in roots. Contributes to the basipetal transport in hypocotyls and root tips by establishing an auxin uptake sink in the root cap. Confers sensitivity to 1-N-naphthylphthalamic acid (NPA). Regulates the root elongation, the initiation of lateral roots and the development of root hairs. Can transport IAA, indole-3-propionic acid, NPA syringic acid, vanillic acid and some auxin metabolites, but not 2,4-D and 1-naphthaleneacetic acid. In Arabidopsis thaliana (Mouse-ear cress), this protein is ABC transporter B family member 4 (ABCB4).